We begin with the raw amino-acid sequence, 335 residues long: DNA polymerase beta (335 aa).

Residue lysine 41 forms a Glycyl lysine isopeptide (Lys-Gly) (interchain with G-Cter in ubiquitin) linkage. Residue lysine 60 coordinates K(+). Lysine 60 lines the Na(+) pocket. Lysine 61 participates in a covalent cross-link: Glycyl lysine isopeptide (Lys-Gly) (interchain with G-Cter in ubiquitin). Residues leucine 62 and valine 65 each contribute to the K(+) site. The Na(+) site is built by leucine 62 and valine 65. The active-site Nucleophile; Schiff-base intermediate with DNA; for 5'-dRP lyase activity is the lysine 72. N6-acetyllysine is present on lysine 72. Lysine 81 participates in a covalent cross-link: Glycyl lysine isopeptide (Lys-Gly) (interchain with G-Cter in ubiquitin). Arginine 83 carries the post-translational modification Omega-N-methylarginine; by PRMT6. K(+) is bound by residues threonine 101, valine 103, and isoleucine 106. Residues threonine 101, valine 103, and isoleucine 106 each coordinate Na(+). Arginine 149 contacts a 2'-deoxyribonucleoside 5'-triphosphate. An Omega-N-methylarginine; by PRMT6 modification is found at arginine 152. The a 2'-deoxyribonucleoside 5'-triphosphate site is built by serine 180, arginine 183, glycine 189, and aspartate 190. The segment at 183–192 (RGAESSGDMD) is DNA-binding. The Mg(2+) site is built by aspartate 190, aspartate 192, and aspartate 256.

The protein belongs to the DNA polymerase type-X family. As to quaternary structure, monomer. Binds single-stranded DNA (ssDNA). Interacts with APEX1, LIG1, LIG3, FEN1, PCNA and XRCC1. Interacts with HUWE1/ARF-BP1, STUB1/CHIP and USP47. Interacts with FAM168A. Mg(2+) serves as cofactor. Post-translationally, methylation by PRMT6 stimulates the polymerase activity by enhancing DNA binding and processivity. In terms of processing, ubiquitinated at Lys-41, Lys-61 and Lys-81: monoubiquitinated by HUWE1/ARF-BP1. Monoubiquitinated protein is then the target of STUB1/CHIP, which catalyzes polyubiquitination from monoubiquitin, leading to degradation by the proteasome. USP47 mediates the deubiquitination of monoubiquitinated protein, preventing polyubiquitination by STUB1/CHIP and its subsequent degradation.

It is found in the nucleus. The protein localises to the cytoplasm. It carries out the reaction DNA(n) + a 2'-deoxyribonucleoside 5'-triphosphate = DNA(n+1) + diphosphate. The catalysed reaction is a 5'-end 2'-deoxyribose-2'-deoxyribonucleotide-DNA = (2E,4S)-4-hydroxypenten-2-al-5-phosphate + a 5'-end 5'-phospho-2'-deoxyribonucleoside-DNA + H(+). It catalyses the reaction 2'-deoxyribonucleotide-(2'-deoxyribose 5'-phosphate)-2'-deoxyribonucleotide-DNA = a 3'-end 2'-deoxyribonucleotide-(2,3-dehydro-2,3-deoxyribose 5'-phosphate)-DNA + a 5'-end 5'-phospho-2'-deoxyribonucleoside-DNA + H(+). Repair polymerase that plays a key role in base-excision repair. During this process, the damaged base is excised by specific DNA glycosylases, the DNA backbone is nicked at the abasic site by an apurinic/apyrimidic (AP) endonuclease, and POLB removes 5'-deoxyribose-phosphate from the preincised AP site acting as a 5'-deoxyribose-phosphate lyase (5'-dRP lyase); through its DNA polymerase activity, it adds one nucleotide to the 3' end of the arising single-nucleotide gap. Conducts 'gap-filling' DNA synthesis in a stepwise distributive fashion rather than in a processive fashion as for other DNA polymerases. It is also able to cleave sugar-phosphate bonds 3' to an intact AP site, acting as an AP lyase. This Rattus norvegicus (Rat) protein is DNA polymerase beta (Polb).